A 114-amino-acid polypeptide reads, in one-letter code: Large ribosomal subunit protein bL20 (114 aa).

This sequence belongs to the bacterial ribosomal protein bL20 family.

In terms of biological role, binds directly to 23S ribosomal RNA and is necessary for the in vitro assembly process of the 50S ribosomal subunit. It is not involved in the protein synthesizing functions of that subunit. The sequence is that of Large ribosomal subunit protein bL20 from Anaeromyxobacter sp. (strain Fw109-5).